The chain runs to 470 residues: Uronate isomerase (470 aa).

It belongs to the metallo-dependent hydrolases superfamily. Uronate isomerase family.

The enzyme catalyses D-glucuronate = D-fructuronate. The catalysed reaction is aldehydo-D-galacturonate = keto-D-tagaturonate. It participates in carbohydrate metabolism; pentose and glucuronate interconversion. The polypeptide is Uronate isomerase (Salmonella typhi).